The following is a 354-amino-acid chain: Ferredoxin--NADP reductase (354 aa).

FAD is bound by residues aspartate 39, glutamine 47, tyrosine 52, valine 92, phenylalanine 127, aspartate 296, and threonine 337.

It belongs to the ferredoxin--NADP reductase type 2 family. As to quaternary structure, homodimer. It depends on FAD as a cofactor.

It catalyses the reaction 2 reduced [2Fe-2S]-[ferredoxin] + NADP(+) + H(+) = 2 oxidized [2Fe-2S]-[ferredoxin] + NADPH. This is Ferredoxin--NADP reductase from Albidiferax ferrireducens (strain ATCC BAA-621 / DSM 15236 / T118) (Rhodoferax ferrireducens).